The primary structure comprises 255 residues: MVSWMISRAVVLVFGMLYPAYYSYKAVKTKNVKEYVRWMMYWIVFALYTVIETVADQTVAWFPLYYELKIAFVIWLLSPYTKGASLIYRKFLHPLLSSKEREIDDYIVQAKERGYETMVNFGRQGLNLAATAAVTAAVKSQGAITERLRSFSMHDLTTIQGDEPVGQRPYQPLPEAKKKSKPAPSESAGYGIPLKDGDEKTDEEAEGPYSDNEMLTHKGLRRSQSMKSVKTTKGRKEVRYGSLKYKVKKRPQVYF.

3 helical membrane-spanning segments follow: residues 1-21 (MVSW…YPAY), 35-55 (YVRW…ETVA), and 59-79 (VAWF…LLSP). The segment at 158-242 (TIQGDEPVGQ…KGRKEVRYGS (85 aa)) is disordered. Residue Thr-201 is modified to Phosphothreonine. Ser-210 is modified (phosphoserine). The segment covering 222–231 (RSQSMKSVKT) has biased composition (polar residues).

It belongs to the DP1 family. Expressed in circumvallate papillae.

It localises to the endoplasmic reticulum membrane. Functionally, microtubule-binding protein required to ensure proper cell division and nuclear envelope reassembly by sequestering the endoplasmic reticulum away from chromosomes during mitosis. Probably acts by clearing the endoplasmic reticulum membrane from metaphase chromosomes. The protein is Receptor expression-enhancing protein 3 (REEP3) of Homo sapiens (Human).